Consider the following 67-residue polypeptide: U-myrmeciitoxin(01)-Mg4a (67 aa).

Residues 1–25 (MGKVFFFVLMIAIIGSTFLIEEALG) form the signal peptide.

The protein belongs to the ant myrmeciitoxin-01 family. In terms of assembly, homodimer; disulfide-linked. Post-translationally, contains 2 intrachain disulfide bonds (one per chain) and 1 interchain disulfide bond. Expressed by the venom gland.

The protein localises to the secreted. This Myrmecia gulosa (Red bulldog ant) protein is U-myrmeciitoxin(01)-Mg4a.